Reading from the N-terminus, the 491-residue chain is Zinc finger and SCAN domain-containing protein 22 (491 aa).

Residue Ser9 is modified to Phosphoserine. One can recognise an SCAN box domain in the interval 49–131; sequence RLRFRHFRYE…VLVEDLTQVL (83 aa). Disordered regions lie at residues 134–161 and 204–249; these read RGWD…SNVT and FKKT…DKFD. A compositionally biased stretch (basic and acidic residues) spans 214–224; the sequence is VPTDQRGRESG. Residues 225–241 show a composition bias toward polar residues; sequence ASRNSSSAWPNLTSQEK. 8 consecutive C2H2-type zinc fingers follow at residues 268-290, 296-318, 324-346, 352-374, 380-402, 408-430, 436-458, and 464-486; these read SKCR…QKTH, YACS…QVVH, HECK…QRIH, YKCG…QRVH, YECD…QRIH, YKCD…LRIH, YQCK…QRIH, and YKCS…LRIH. A Glycyl lysine isopeptide (Lys-Gly) (interchain with G-Cter in SUMO2) cross-link involves residue Lys443.

This sequence belongs to the krueppel C2H2-type zinc-finger protein family.

The protein resides in the nucleus. Functionally, may be involved in transcriptional regulation. The protein is Zinc finger and SCAN domain-containing protein 22 (ZSCAN22) of Homo sapiens (Human).